The chain runs to 864 residues: MHERYVPADVEAAAQSDWRAADAYRSKEDANRKKFYCVSMLPYPSGKLHMGHVRNYTINDVMYRYLRMNGYNTLMPMGWDAFGMPAENAAMANGVPPAQWTYDNIAYMKKQMQSMGLAIDWSREVTTCKPDYYKWNQWLFLKMLEKGIAYKKTGTVNWDPVDQTVLANEQVIDGRGWRSGALVEKREIPMYYMRITQYADELLNDLDGLGWPERVKIMQQNWIGKSFGVNFGFPYELDGEKKLLRVFTTRADTIMGVTFCAIAAEHPLAARLAQDKPELQAFIDECKRGGVAEADIATMEKKGVATGFSVSHPLTGAPVEVWIGNYVLMSYGEGAVMGVPAHDERDFAFAKKYGLPIRQVIAVEGETYSTDAWQEWYGDKTRAVCVNSGKYDGLAYDAAVDAIAADLKAGGFGDKQITYRLRDWGISRQRYWGTPIPIIHCPSCGDVPVPEQDLPVVLPEDLVPDGTGNPLAKSDAFLNCACPKCGAAAKRETDTMDTFVDSAWYFSRYAAPDAQTMVDARTDYWMPMDQYIGGIEHAILHLLYSRFWAKVMRDLGLVAFGEPAKNLLTQGMVLNETFYREDAAGKKTWYNPADVTVSFDDKGRPVGAVLKADGQPVVLGGIEKMSKSKNNGVDPQMLIDHYGADTARLFTMFAAPPEQQLEWSGAGVDGASRFLRRVWAFGFANREALAVRAPFDVAQLAEADKTLRREIHGVLKQADFDYQRLQYNTVVSAAMKMLNAIEGAKGATPAVLRETYGVLLRVLYPVVPHVTYELWKALGYADEFGPLLDAPWPKVDEAALEQAEIELVLQINGKVRGALKVAKDASREAIEAAAVADEMFAKFAEGKPAKKIIVVPGRLVNVVV.

The 'HIGH' region signature appears at 42–52 (PYPSGKLHMGH). Positions 624-628 (KMSKS) match the 'KMSKS' region motif. Lys-627 contributes to the ATP binding site.

Belongs to the class-I aminoacyl-tRNA synthetase family.

The protein localises to the cytoplasm. It carries out the reaction tRNA(Leu) + L-leucine + ATP = L-leucyl-tRNA(Leu) + AMP + diphosphate. The protein is Leucine--tRNA ligase of Burkholderia thailandensis (strain ATCC 700388 / DSM 13276 / CCUG 48851 / CIP 106301 / E264).